We begin with the raw amino-acid sequence, 352 residues long: Speedy protein E18 (352 aa).

Over residues 1–12 the composition is skewed to basic residues; that stretch reads MDRTKTRFRKRG. The segment at 1 to 90 is disordered; the sequence is MDRTKTRFRK…EPEKELAPEP (90 aa). Residues 16–39 show a composition bias toward polar residues; the sequence is GKITTSRQPHPQNEQSLQRSTSGY. Residues 76 to 90 show a composition bias toward acidic residues; the sequence is DESEEEPEKELAPEP.

It belongs to the Speedy/Ringo family.

This Homo sapiens (Human) protein is Speedy protein E18.